A 214-amino-acid polypeptide reads, in one-letter code: Ribosomal RNA large subunit methyltransferase E (214 aa).

Residues glycine 60, tryptophan 62, aspartate 86, aspartate 102, and aspartate 127 each contribute to the S-adenosyl-L-methionine site. Lysine 167 acts as the Proton acceptor in catalysis.

The protein belongs to the class I-like SAM-binding methyltransferase superfamily. RNA methyltransferase RlmE family.

The protein resides in the cytoplasm. The catalysed reaction is uridine(2552) in 23S rRNA + S-adenosyl-L-methionine = 2'-O-methyluridine(2552) in 23S rRNA + S-adenosyl-L-homocysteine + H(+). Functionally, specifically methylates the uridine in position 2552 of 23S rRNA at the 2'-O position of the ribose in the fully assembled 50S ribosomal subunit. This is Ribosomal RNA large subunit methyltransferase E from Herminiimonas arsenicoxydans.